The chain runs to 590 residues: Beta-fructofuranosidase, insoluble isoenzyme CWINV2 (590 aa).

An N-terminal signal peptide occupies residues 1–25 (MSAPKFGYVLLLIVLINISNNGVDA). Residues 59 to 62 (WIND), Q78, and W86 each bind substrate. Residue D62 is part of the active site. N118 carries N-linked (GlcNAc...) asparagine glycosylation. A substrate-binding site is contributed by 121–122 (WS). Residues N143 and N180 are each glycosylated (N-linked (GlcNAc...) asparagine). Residues 185–186 (RD), E241, and D275 each bind substrate. Residue N335 is glycosylated (N-linked (GlcNAc...) asparagine). C435 and C483 form a disulfide bridge. An N-linked (GlcNAc...) asparagine glycan is attached at N564.

Belongs to the glycosyl hydrolase 32 family. Expressed in flowers, and seeds.

It localises to the secreted. The protein resides in the extracellular space. Its subcellular location is the apoplast. It is found in the cell wall. The catalysed reaction is Hydrolysis of terminal non-reducing beta-D-fructofuranoside residues in beta-D-fructofuranosides.. The sequence is that of Beta-fructofuranosidase, insoluble isoenzyme CWINV2 (CWINV2) from Arabidopsis thaliana (Mouse-ear cress).